The following is a 107-amino-acid chain: UPF0060 membrane protein RPD_3084 (107 aa).

The next 4 membrane-spanning stretches (helical) occupy residues 5–25, 31–51, 59–79, and 85–105; these read IIYVCAALAEIAGCFAFWGWL, VWWLLPGMLSLAAFAYLLTLV, AYASYGGIYIVASLVWLWSVE, and RWDVTGGCVCLIGAAIILWGP.

The protein belongs to the UPF0060 family.

The protein localises to the cell inner membrane. This is UPF0060 membrane protein RPD_3084 from Rhodopseudomonas palustris (strain BisB5).